The chain runs to 850 residues: Penicillin-binding protein 1A (850 aa).

At 1-5 the chain is on the cytoplasmic side; that stretch reads MKFVK. Residues 6–26 form a helical; Signal-anchor for type II membrane protein membrane-spanning segment; it reads YFLILAVCCILLGAGSIYGLY. Topologically, residues 27 to 850 are periplasmic; it reads RYIEPQLPDV…IDNGEAQELF (824 aa). The transglycosylase stretch occupies residues 48 to 216; the sequence is MQIYSADGEL…STFNPLYSMD (169 aa). The active-site Proton donor; for transglycosylase activity is the E86. Residues 400–710 are transpeptidase; sequence DVLQTGQQIW…GWRAGRDLQR (311 aa). S465 serves as the catalytic Acyl-ester intermediate; for transpeptidase activity.

In the N-terminal section; belongs to the glycosyltransferase 51 family. The protein in the C-terminal section; belongs to the transpeptidase family.

It localises to the cell inner membrane. It catalyses the reaction [GlcNAc-(1-&gt;4)-Mur2Ac(oyl-L-Ala-gamma-D-Glu-L-Lys-D-Ala-D-Ala)](n)-di-trans,octa-cis-undecaprenyl diphosphate + beta-D-GlcNAc-(1-&gt;4)-Mur2Ac(oyl-L-Ala-gamma-D-Glu-L-Lys-D-Ala-D-Ala)-di-trans,octa-cis-undecaprenyl diphosphate = [GlcNAc-(1-&gt;4)-Mur2Ac(oyl-L-Ala-gamma-D-Glu-L-Lys-D-Ala-D-Ala)](n+1)-di-trans,octa-cis-undecaprenyl diphosphate + di-trans,octa-cis-undecaprenyl diphosphate + H(+). The catalysed reaction is Preferential cleavage: (Ac)2-L-Lys-D-Ala-|-D-Ala. Also transpeptidation of peptidyl-alanyl moieties that are N-acyl substituents of D-alanine.. It functions in the pathway cell wall biogenesis; peptidoglycan biosynthesis. Its function is as follows. Cell wall formation. Synthesis of cross-linked peptidoglycan from the lipid intermediates. The enzyme has a penicillin-insensitive transglycosylase N-terminal domain (formation of linear glycan strands) and a penicillin-sensitive transpeptidase C-terminal domain (cross-linking of the peptide subunits). In Escherichia coli (strain K12), this protein is Penicillin-binding protein 1A (mrcA).